The following is an 83-amino-acid chain: Mu-theraphotoxin-Hhn2o (83 aa).

The signal sequence occupies residues 1–21 (MKASMFLALAGLVLLFVVGYA). Residues 22 to 48 (SESEEKEFPIELLSKIFAVDVFKGEER) constitute a propeptide that is removed on maturation. Intrachain disulfides connect Cys-50/Cys-65, Cys-57/Cys-70, and Cys-64/Cys-77. A Leucine amide modification is found at Leu-81.

This sequence belongs to the neurotoxin 10 (Hwtx-1) family. 15 (Hntx-3) subfamily. In terms of assembly, monomer. In terms of tissue distribution, expressed by the venom gland.

It is found in the secreted. Functionally, lethal neurotoxin. Selectively blocks tetrodotoxin-sensitive voltage-gated sodium channels (Nav). Does not affect tetrodotoxin-resistant voltage-gated sodium channels or calcium channels. The protein is Mu-theraphotoxin-Hhn2o of Cyriopagopus hainanus (Chinese bird spider).